The chain runs to 273 residues: MLLIDVGNSHVVFGIQGENGGRVCVRELFRLAPDARKTQDEYSLLIHALCERAGVGRASLRDAFISSVVPVLTKTVADAVAQISGVQPVVFGPWAYEHLPVRIPEPVRAEIGTDLVANAVAAYVHFRSACVVVDCGTALTFTAVDGTGLIQGVAIAPGLRTAVQSLHTGTAQLPLVPLALPDSVLGKDTTHAVQAGVVRGTLFVIRAMIAQCQKELGCRCAAVITGGLSRLFSSEVDFPPIDAQLTLSGLAHIARLVPTSLLPPATVSGSSGN.

5-12 (DVGNSHVV) is a binding site for ATP. 112–115 (GTDL) lines the substrate pocket. Catalysis depends on aspartate 114, which acts as the Proton acceptor. Aspartate 134 serves as a coordination point for K(+). Residue threonine 137 participates in ATP binding. Threonine 189 provides a ligand contact to substrate.

The protein belongs to the type III pantothenate kinase family. In terms of assembly, homodimer. Requires NH4(+) as cofactor. K(+) serves as cofactor.

The protein resides in the cytoplasm. It carries out the reaction (R)-pantothenate + ATP = (R)-4'-phosphopantothenate + ADP + H(+). It participates in cofactor biosynthesis; coenzyme A biosynthesis; CoA from (R)-pantothenate: step 1/5. Functionally, catalyzes the phosphorylation of pantothenate (Pan), the first step in CoA biosynthesis. The sequence is that of Type III pantothenate kinase from Treponema pallidum subsp. pallidum (strain SS14).